We begin with the raw amino-acid sequence, 366 residues long: Cobalt-precorrin-5B C(1)-methyltransferase (366 aa).

It belongs to the CbiD family.

The catalysed reaction is Co-precorrin-5B + S-adenosyl-L-methionine = Co-precorrin-6A + S-adenosyl-L-homocysteine. It participates in cofactor biosynthesis; adenosylcobalamin biosynthesis; cob(II)yrinate a,c-diamide from sirohydrochlorin (anaerobic route): step 6/10. In terms of biological role, catalyzes the methylation of C-1 in cobalt-precorrin-5B to form cobalt-precorrin-6A. This is Cobalt-precorrin-5B C(1)-methyltransferase from Paraburkholderia phymatum (strain DSM 17167 / CIP 108236 / LMG 21445 / STM815) (Burkholderia phymatum).